Here is a 322-residue protein sequence, read N- to C-terminus: Ferrochelatase (322 aa).

Fe cation is bound by residues H193 and E274.

It belongs to the ferrochelatase family.

It localises to the cytoplasm. It carries out the reaction heme b + 2 H(+) = protoporphyrin IX + Fe(2+). It functions in the pathway porphyrin-containing compound metabolism; protoheme biosynthesis; protoheme from protoporphyrin-IX: step 1/1. Its function is as follows. Catalyzes the ferrous insertion into protoporphyrin IX. The protein is Ferrochelatase of Aliivibrio fischeri (strain MJ11) (Vibrio fischeri).